Reading from the N-terminus, the 565-residue chain is MAPKTLAERLAELEDPTPKDFDPEDLERAGPDSDDEGNEAADPNAGREHYQAVGKARLRRQDPINLGKQYAGSKISREALEAESDDDPFRPRSSDEEEDSEDEEEEDSELGSDEDEDASEESEEERPQRSRTSAKDSKRQRKESQVSSDEKDGEGMDTDGSEETEGSEDDSEDGFDEDDMSGEFSSDDDQEGDEDGDDDEDEDEETDNRKVRFQETSKSDDREELRRLMSSDQKTIAATISQAAKADAAKGRAVKQQRATFDALLNARIKLQKGLTAINRLSVTTKGSDETPSIDGEAIKSAESAALALWSTLEDLRLALADAQTQDESKKRKRPSAVSVATSTDSLWKRMTDLESDAVPHRRTVLDKWSLKVRGSTAALPNARGKLLGASASSQQTISAVIDAQVASETGDRAAKRRRHSSDEGPEPVYDDTVFYQSLLRDLVEQRMSSSDAITNGIDTLHLQLPSRQGIHPITGMRKDKVKRDVDTRASKGRKMRFDVHEKLQNFMAPEDRGTWTITAREEFFASLLGKTASGLLREGDDEDASAAEESDEDREEVGLRLFRS.

A compositionally biased stretch (basic and acidic residues) spans 1 to 31 (MAPKTLAERLAELEDPTPKDFDPEDLERAGP). 3 disordered regions span residues 1 to 225 (MAPK…REEL), 404 to 430 (AQVA…EPVY), and 537 to 565 (LREG…LFRS). The span at 95–124 (DEEEDSEDEEEEDSELGSDEDEDASEESEE) shows a compositional bias: acidic residues. Basic and acidic residues predominate over residues 125–154 (ERPQRSRTSAKDSKRQRKESQVSSDEKDGE). Acidic residues predominate over residues 155-206 (GMDTDGSEETEGSEDDSEDGFDEDDMSGEFSSDDDQEGDEDGDDDEDEDEET). Over residues 207 to 225 (DNRKVRFQETSKSDDREEL) the composition is skewed to basic and acidic residues. Residues 540–556 (GDDEDASAAEESDEDRE) are compositionally biased toward acidic residues.

It belongs to the AATF family.

It is found in the nucleus. It localises to the nucleolus. The sequence is that of Protein bfr2 (bfr2) from Aspergillus fumigatus (strain ATCC MYA-4609 / CBS 101355 / FGSC A1100 / Af293) (Neosartorya fumigata).